The primary structure comprises 415 residues: MNIIDLFAGCGGFSHGFKMAGYNSILAIEKDLWASQTYSFNNPNVSVITEDITTLDPGDLKISVSDVDGIIGGPPCQGFSLSGNRDQKDPRNSLFVDFVRFVKFFSPKFFVMENVLGILSMKTKSRQYVKDIIAEEFSNVGYKVCVIILNACDYGVPQSRQRVFFIGLKSDRPLNQQILTPPSKVIESEYTSLEEAISDLPVIEAGEGGEVQDYPVAPRNKYQENMRKGSTCVYNHVAMRHTQRLVDRFAAIKFGQSVKHVSEEHSQRKRGDANSISGKVFSQNNMRPYPYKPCPTVAASFQSNFIHPFYNRNFTAREGARIQSFPDTYIFQGKRTTMSWEKHLSQYQQIGNAVPPLLAQALAERISWYFENINLINDSNVSIKRMVQRSFMSQLNLENNVNVRQDDNYDKVHSF.

Positions 1 to 373 (MNIIDLFAGC…ERISWYFENI (373 aa)) constitute an SAM-dependent MTase C5-type domain. Cys76 is a catalytic residue.

The protein belongs to the class I-like SAM-binding methyltransferase superfamily. C5-methyltransferase family.

The enzyme catalyses a 2'-deoxycytidine in DNA + S-adenosyl-L-methionine = a 5-methyl-2'-deoxycytidine in DNA + S-adenosyl-L-homocysteine + H(+). A methylase that recognizes the double-stranded sequence 5'-CTNAG-3', methylates C-1 on both strands, and protects the DNA from cleavage by the DdeI endonuclease. In Desulfomicrobium norvegicum (strain DSM 1741 / NCIMB 8310) (Desulfovibrio baculatus (strain Norway 4)), this protein is Type II methyltransferase M.DdeI (ddeIM).